Here is a 301-residue protein sequence, read N- to C-terminus: E3 ubiquitin-protein ligase RNF144B (301 aa).

The TRIAD supradomain stretch occupies residues 26-242; sequence PLVTCKLCLC…YDKGPCRNKL (217 aa). Residues C30, C33, C53, C56, C121, C126, C145, C148, C153, C156, H161, C166, C191, and C194 each coordinate Zn(2+). The RING-type 1 zinc finger occupies 30–80; that stretch reads CKLCLCEQSLDKMTMLQECQCIFCTPCLKQYMVLSIREGCGSPITCPDMVC. An IBR-type zinc finger spans residues 101–166; sequence QLYQRLKFER…KDAWHEESSC (66 aa). An RING-type 2; atypical zinc finger spans residues 191–220; that stretch reads CPVCRIYIERNEGCAQMMCKNCKHTFCWYC. C204 is a catalytic residue. Residues C209, C212, C217, C220, H232, and C238 each contribute to the Zn(2+) site. A helical membrane pass occupies residues 256–276; it reads VVGILVGLGVIALVTSPLLLL.

It belongs to the RBR family. RNF144 subfamily. Interacts with UBE2L3, UBE2L6 and LCMT2, as well as with BAX. Interacts with TBK1; this interaction inhibits TBK1 phosphorylation and 'Lys-63'-linked polyubiquitination. Post-translationally, auto-ubiquitinated.

It is found in the mitochondrion membrane. The protein localises to the cytoplasm. It catalyses the reaction [E2 ubiquitin-conjugating enzyme]-S-ubiquitinyl-L-cysteine + [acceptor protein]-L-lysine = [E2 ubiquitin-conjugating enzyme]-L-cysteine + [acceptor protein]-N(6)-ubiquitinyl-L-lysine.. It functions in the pathway protein modification; protein ubiquitination. In terms of biological role, E3 ubiquitin-protein ligase which accepts ubiquitin from E2 ubiquitin-conjugating enzymes UBE2L3 and UBE2L6 in the form of a thioester and then directly transfers the ubiquitin to targeted substrates such as LCMT2, thereby promoting their degradation. Induces apoptosis via a p53/TP53-dependent but caspase-independent mechanism. Plays a crucial role in maintaining the genomic stability by controlling the degradation of multiple proteins involved in mitotic progression and DNA damage. Regulates epithelial homeostasis by mediating degradation of CDKN1A and isoform 2 of TP63. Plays a regulatory role in innate immunity by negatively regulating IRF3 activation and IFN-beta production. Mechanistically, inhibits TBK1 phosphorylation and 'Lys-63'-linked polyubiquitination independently of its E3 ligase activity. Alternatively, promotes 'Lys-27' and 'Lys-33'-linked ubiquitination of IFIH1/MDA5, promoting selective autophagic degradation of IFIH1/MDA5 to inhibit antiviral response. The sequence is that of E3 ubiquitin-protein ligase RNF144B (Rnf144b) from Mus musculus (Mouse).